A 430-amino-acid polypeptide reads, in one-letter code: Serine--tRNA ligase (430 aa).

The segment at 41–60 is disordered; the sequence is QSRTQDLQNERNVRSKSIGK. 236-238 contacts L-serine; the sequence is TAE. 267 to 269 serves as a coordination point for ATP; that stretch reads RSE. Glu-290 contacts L-serine. 354–357 is a binding site for ATP; it reads EISS. Ser-390 serves as a coordination point for L-serine.

This sequence belongs to the class-II aminoacyl-tRNA synthetase family. Type-1 seryl-tRNA synthetase subfamily. In terms of assembly, homodimer. The tRNA molecule binds across the dimer.

Its subcellular location is the cytoplasm. The catalysed reaction is tRNA(Ser) + L-serine + ATP = L-seryl-tRNA(Ser) + AMP + diphosphate + H(+). It catalyses the reaction tRNA(Sec) + L-serine + ATP = L-seryl-tRNA(Sec) + AMP + diphosphate + H(+). Its pathway is aminoacyl-tRNA biosynthesis; selenocysteinyl-tRNA(Sec) biosynthesis; L-seryl-tRNA(Sec) from L-serine and tRNA(Sec): step 1/1. Functionally, catalyzes the attachment of serine to tRNA(Ser). Is also able to aminoacylate tRNA(Sec) with serine, to form the misacylated tRNA L-seryl-tRNA(Sec), which will be further converted into selenocysteinyl-tRNA(Sec). The chain is Serine--tRNA ligase from Alteromonas mediterranea (strain DSM 17117 / CIP 110805 / LMG 28347 / Deep ecotype).